The primary structure comprises 645 residues: DNA mismatch repair protein MutL (645 aa).

This sequence belongs to the DNA mismatch repair MutL/HexB family.

This protein is involved in the repair of mismatches in DNA. It is required for dam-dependent methyl-directed DNA mismatch repair. May act as a 'molecular matchmaker', a protein that promotes the formation of a stable complex between two or more DNA-binding proteins in an ATP-dependent manner without itself being part of a final effector complex. In Geobacillus thermodenitrificans (strain NG80-2), this protein is DNA mismatch repair protein MutL.